We begin with the raw amino-acid sequence, 151 residues long: Large ribosomal subunit protein bL9 (151 aa).

It belongs to the bacterial ribosomal protein bL9 family.

Binds to the 23S rRNA. This is Large ribosomal subunit protein bL9 from Pelodictyon phaeoclathratiforme (strain DSM 5477 / BU-1).